The chain runs to 511 residues: Cytochrome P450 monooxygenase nodR (511 aa).

Residues 8–28 (ILFPISWEQSPIFLAVGLIFA) traverse the membrane as a helical segment. Residues Asn76 and Asn373 are each glycosylated (N-linked (GlcNAc...) asparagine). Cys452 contacts heme.

It belongs to the cytochrome P450 family. It depends on heme as a cofactor.

The protein localises to the membrane. Its pathway is secondary metabolite biosynthesis. Functionally, cytochrome P450 monooxygenase; part of the gene cluster that mediates the biosynthesis of the indole diterpenes nodulisporic acids (NA). Nodulisporic acid A (NAA) and its chemically modified derivatives are of particular significance because of their highly potent insecticidal activity against blood-feeding arthropods and lack of observable adverse effects on mammals, in particular the tremogenicity associated with the paspaline-derived IDTs is not observed. The geranylgeranyl diphosphate (GGPP) synthase ggs1, localized outside of the cluster, is proposed to catalyze the first step in nodulisporic acid biosynthesis via conversion of farnesyl pyrophosphate and isopentyl pyrophosphate into geranylgeranyl pyrophosphate (GGPP). Condensation of indole-3-glycerol phosphate with GGPP by the prenyl transferase nodC then forms 3-geranylgeranylindole (3-GGI). Epoxidation by the FAD-dependent monooxygenase nodM leads to a single-epoxidized-GGI that is substrate of the terpene cyclase nodB for cyclization to yield emindole SB. The terminal methyl carbon, C28, of emindole SB is then oxidized by the cytochrome P450 monooxygenase nodW to produce nodulisporic acid F (NAF), the pentacyclic core of NAA. NAF is converted to nodulisporic acid E (NAE) via prenylation. This step is probably performed by one of the indole diterpene prenyltransferases nodD1 or nodD2. Several oxidation steps performed by the FAD-linked oxidoreductase nodO and one of the cytochrome P450 monooxygenase nodR, nodX or nodZ further convert NAE to nodulisporic acid D (NAD). NAD is substrate of cytochrome P450 monooxygenase nodJ to produce the precursor of nodulisporic acid C (NAC), converted to NAC by one of the indole diterpene prenyltransferases nodD1 or nodD2. The FAD-dependent monooxygenase nodY2 then oxidizes NAC to nodulisporic acid B (NAB). Finally NAB is converted to NAA by one of the cytochrome P450 monooxygenases nodR, nodX or nodZ. The sequence is that of Cytochrome P450 monooxygenase nodR from Hypoxylon pulicicidum.